Here is a 159-residue protein sequence, read N- to C-terminus: Phosphopantetheine adenylyltransferase (159 aa).

T10 contributes to the substrate binding site. Residues 10 to 11 (TF) and H18 contribute to the ATP site. 3 residues coordinate substrate: K42, L74, and R88. ATP is bound by residues 89 to 91 (GLR), E99, and 124 to 130 (YAFISSS).

The protein belongs to the bacterial CoaD family. As to quaternary structure, homohexamer. Mg(2+) serves as cofactor.

The protein resides in the cytoplasm. It catalyses the reaction (R)-4'-phosphopantetheine + ATP + H(+) = 3'-dephospho-CoA + diphosphate. It functions in the pathway cofactor biosynthesis; coenzyme A biosynthesis; CoA from (R)-pantothenate: step 4/5. Functionally, reversibly transfers an adenylyl group from ATP to 4'-phosphopantetheine, yielding dephospho-CoA (dPCoA) and pyrophosphate. This is Phosphopantetheine adenylyltransferase from Hydrogenovibrio crunogenus (strain DSM 25203 / XCL-2) (Thiomicrospira crunogena).